The following is a 200-amino-acid chain: Small ribosomal subunit protein uS4 (200 aa).

A disordered region spans residues 22-43; sequence TGKELERRPYAPGQHGPTQRKK. Residues 92–170 enclose the S4 RNA-binding domain; sequence QRLDNIVYRL…VPEYVTFDAE (79 aa).

This sequence belongs to the universal ribosomal protein uS4 family. In terms of assembly, part of the 30S ribosomal subunit. Contacts protein S5. The interaction surface between S4 and S5 is involved in control of translational fidelity.

Functionally, one of the primary rRNA binding proteins, it binds directly to 16S rRNA where it nucleates assembly of the body of the 30S subunit. With S5 and S12 plays an important role in translational accuracy. The protein is Small ribosomal subunit protein uS4 of Listeria monocytogenes serotype 4b (strain F2365).